The primary structure comprises 573 residues: MLFIDFCKILDKIEKTTKRLEKTDYFVELIDFIKNNGKAENLKQVSQITIGRVFAEFENKEIGIGPNLLIEAVKTTGISEKDLKAEIKKTGDIGIAVENLSSNIKQVSLFSQPLTLEEIYSTLKKLSEIEGNSSQKKKTRIISNLLILSNPVESRYISRLILEDMRIGMNIPTILASFSNYFNVNKEAVEKIYAVTNDIGLIGKKLISGSDIENDSELKLKVFRPIKPMLAQLTPSIEDAIIETKMPQFETKYDGARVQVHKSNGKVNIYSRRLENITNSVPELVEEINKIDIDNIILEGECVAMDLSSGKPRPFQDILRRFRRKYDIDKVAEKIALRIYFFDVLYYEKGLIDTPLKNRREILEKLFGTNNWDSELEKIQKEIFSNKMLFSSFKLNSDDPDLAKEFFNWSLSIGHEGIMIKNPDAPYTPGSRVKTMYKVKPTLENLDVVVTRAKIGMGKRKDWYGSYEISVKDDEDNLHVIGNVGSGLTEDDLERLTTIVNEIKIEDLGEEVILEPKIVLEVTYEEIQTSEKYEMGYALRFPRVVQIREDKSINDINTLDDVKKIYEIERNRK.

E250 is a binding site for ATP. K252 functions as the N6-AMP-lysine intermediate in the catalytic mechanism. R257, R272, E301, F342, R432, and K438 together coordinate ATP.

Belongs to the ATP-dependent DNA ligase family. The cofactor is Mg(2+).

The enzyme catalyses ATP + (deoxyribonucleotide)n-3'-hydroxyl + 5'-phospho-(deoxyribonucleotide)m = (deoxyribonucleotide)n+m + AMP + diphosphate.. Functionally, DNA ligase that seals nicks in double-stranded DNA during DNA replication, DNA recombination and DNA repair. This is DNA ligase from Methanococcus maripaludis (strain C6 / ATCC BAA-1332).